The primary structure comprises 142 residues: Transcription antitermination protein NusB (142 aa).

Belongs to the NusB family.

Functionally, involved in transcription antitermination. Required for transcription of ribosomal RNA (rRNA) genes. Binds specifically to the boxA antiterminator sequence of the ribosomal RNA (rrn) operons. This is Transcription antitermination protein NusB from Streptococcus mutans serotype c (strain ATCC 700610 / UA159).